A 388-amino-acid chain; its full sequence is Chorismate synthase (388 aa).

The NADP(+) site is built by arginine 40 and arginine 46. Residues 131–133 (RSS), 252–253 (NA), glycine 296, 311–315 (KPIPT), and arginine 337 contribute to the FMN site.

This sequence belongs to the chorismate synthase family. In terms of assembly, homotetramer. Requires FMNH2 as cofactor.

The catalysed reaction is 5-O-(1-carboxyvinyl)-3-phosphoshikimate = chorismate + phosphate. Its pathway is metabolic intermediate biosynthesis; chorismate biosynthesis; chorismate from D-erythrose 4-phosphate and phosphoenolpyruvate: step 7/7. Functionally, catalyzes the anti-1,4-elimination of the C-3 phosphate and the C-6 proR hydrogen from 5-enolpyruvylshikimate-3-phosphate (EPSP) to yield chorismate, which is the branch point compound that serves as the starting substrate for the three terminal pathways of aromatic amino acid biosynthesis. This reaction introduces a second double bond into the aromatic ring system. In Limosilactobacillus fermentum (strain NBRC 3956 / LMG 18251) (Lactobacillus fermentum), this protein is Chorismate synthase.